Here is a 279-residue protein sequence, read N- to C-terminus: Bis(5'-nucleosyl)-tetraphosphatase, symmetrical (279 aa).

This sequence belongs to the Ap4A hydrolase family.

The enzyme catalyses P(1),P(4)-bis(5'-adenosyl) tetraphosphate + H2O = 2 ADP + 2 H(+). Functionally, hydrolyzes diadenosine 5',5'''-P1,P4-tetraphosphate to yield ADP. The sequence is that of Bis(5'-nucleosyl)-tetraphosphatase, symmetrical from Edwardsiella ictaluri (strain 93-146).